We begin with the raw amino-acid sequence, 198 residues long: Glycerol-3-phosphate acyltransferase (198 aa).

A run of 5 helical transmembrane segments spans residues 4–24, 53–75, 80–102, 112–132, and 134–154; these read LALI…AVLI, SAAG…GGYF, PFML…FFHF, LGAL…CWVV, and VLVT…APLF.

It belongs to the PlsY family. In terms of assembly, probably interacts with PlsX.

Its subcellular location is the cell inner membrane. The catalysed reaction is an acyl phosphate + sn-glycerol 3-phosphate = a 1-acyl-sn-glycero-3-phosphate + phosphate. The protein operates within lipid metabolism; phospholipid metabolism. Functionally, catalyzes the transfer of an acyl group from acyl-phosphate (acyl-PO(4)) to glycerol-3-phosphate (G3P) to form lysophosphatidic acid (LPA). This enzyme utilizes acyl-phosphate as fatty acyl donor, but not acyl-CoA or acyl-ACP. This chain is Glycerol-3-phosphate acyltransferase, found in Aliivibrio fischeri (strain ATCC 700601 / ES114) (Vibrio fischeri).